The chain runs to 325 residues: Phenylalanine--tRNA ligase alpha subunit (325 aa).

Mg(2+) is bound at residue glutamate 251.

The protein belongs to the class-II aminoacyl-tRNA synthetase family. Phe-tRNA synthetase alpha subunit type 1 subfamily. As to quaternary structure, tetramer of two alpha and two beta subunits. The cofactor is Mg(2+).

The protein localises to the cytoplasm. It catalyses the reaction tRNA(Phe) + L-phenylalanine + ATP = L-phenylalanyl-tRNA(Phe) + AMP + diphosphate + H(+). In Thermotoga maritima (strain ATCC 43589 / DSM 3109 / JCM 10099 / NBRC 100826 / MSB8), this protein is Phenylalanine--tRNA ligase alpha subunit (pheS).